Reading from the N-terminus, the 199-residue chain is Transgelin-2 (199 aa).

Residue A2 is modified to N-acetylalanine. S11 carries the phosphoserine modification. An N6-acetyllysine mark is found at K17 and K20. Residues 24–136 (PDLEQILIQW…RTLMNLGGLA (113 aa)) enclose the Calponin-homology (CH) domain. The residue at position 163 (S163) is a Phosphoserine. K171 is covalently cross-linked (Glycyl lysine isopeptide (Lys-Gly) (interchain with G-Cter in SUMO2)). One copy of the Calponin-like repeat lies at 174-199 (IGLQMGTNRGASQAGMTGYGMPRQIL). Phosphothreonine is present on T180. 2 positions are modified to omega-N-methylarginine: R182 and R196.

This sequence belongs to the calponin family.

This Rattus norvegicus (Rat) protein is Transgelin-2 (Tagln2).